The chain runs to 306 residues: Uricase (306 aa).

Residues K5 and T65 each act as charge relay system in the active site. The urate site is built by T65, D66, F175, R192, I240, Q241, and N267. The disordered stretch occupies residues 281–306 (AKVLREPPRPTGYQQFSMDRSDLEEQ).

The protein belongs to the uricase family.

The enzyme catalyses urate + O2 + H2O = 5-hydroxyisourate + H2O2. It functions in the pathway purine metabolism; urate degradation; (S)-allantoin from urate: step 1/3. Catalyzes the oxidation of uric acid to 5-hydroxyisourate, which is further processed to form (S)-allantoin. The sequence is that of Uricase from Halalkalicoccus jeotgali (strain DSM 18796 / CECT 7217 / JCM 14584 / KCTC 4019 / B3).